A 20-amino-acid chain; its full sequence is Blooming-related protein 2 (20 aa).

Residues 1 to 20 are disordered; that stretch reads VSAEYLERQGPKDDXDCFDD.

In terms of biological role, possible 'checkpoint' protein for cell division in the blooming process. The sequence is that of Blooming-related protein 2 from Prorocentrum triestinum (Red tide alga).